A 333-amino-acid chain; its full sequence is Homeobox protein SIX3 (333 aa).

The span at 57–71 (GGAGGAGGGSGGGGS) shows a compositional bias: gly residues. Disordered stretches follow at residues 57-76 (GGAG…APPE), 233-252 (NPSK…TQVG), and 259-333 (RQRD…ECDV). The interaction with TLE5 stretch occupies residues 73 to 120 (APPEELSMFQLPTLNFSPEQVASVCETLEETGDIERLGRFLWSLPVAP). Residues 207-266 (GEQKTHCFKERTRSLLREWYLQDPYPNPSKKRELAQATGLTPTQVGNWFKNRRQRDRAAA) constitute a DNA-binding region (homeobox). A bind to RHO promoter region spans residues 233-235 (NPS). A compositionally biased stretch (low complexity) spans 294–310 (SAESPSTAASPTTSVSS). Residues 317–333 (TGTSILSVTSSDSECDV) are compositionally biased toward polar residues.

This sequence belongs to the SIX/Sine oculis homeobox family. In terms of assembly, interacts with EYA4; translocates EYA4 from the cytoplasm to the nucleus and promotes activation of their target genes. Interacts with MTA1 and HDAC2; represses its own transcription. Interacts with MTA1; facilitates the binding of SIX3 to the core DNA motif of SIX3 promoter. Interacts with EYA1; promotes EYA1 translocation to the nucleus. Interacts with TLE1 and TLE5 (via Q domain); can act in combination with either TLE1 and/or TLE5 leading to transcriptional repression or activation, respectively. Interacts (via homeobox) with NR4A3; differentially regulates the transcriptional activities NR4A3. Interacts with GMNN. Interacts with TLE4. In terms of tissue distribution, expressed in ependymal cells during the formation of the lateral wall.

It is found in the nucleus. Functionally, transcriptional regulator which can act as both a transcriptional repressor and activator by binding a ATTA homeodomain core recognition sequence on these target genes. During forebrain development represses WNT1 expression allowing zona limitans intrathalamica formation and thereby ensuring proper anterio-posterior patterning of the diencephalon and formation of the rostral diencephalon. Acts as a direct upstream activator of SHH expression in the rostral diencephalon ventral midline and that in turn SHH maintains its expression. In addition, Six3 activity is required for the formation of the telencephalon. During postnatal stages of brain development is necessary for ependymal cell maturation by promoting the maturation of radial glia into ependymal cells through regulation of neuroblast proliferation and migration. Acts on the proliferation and differentiation of neural progenitor cells through activating transcription of CCND1 AND CCND2. During early lens formation plays a role in lens induction and specification by activating directly PAX6 in the presumptive lens ectoderm. In turn PAX6 activates SIX3 resulting in activation of PDGFRA and CCND1 promoting cell proliferation. Also is required for the neuroretina development by directly suppressing WNT8B expression in the anterior neural plate territory. Its action during retina development and lens morphogenesis is TLE5 and TLE4-dependent manner. Furthermore, during eye development regulates several genes expression. Before and during early lens development represses the CRYGF promoter by binding a SIX repressor element. Directly activates RHO transcription, or cooperates with CRX or NRL. Six3 also functions in the formation of the proximodistal axis of the optic cup, and promotes the formation of optic vesicles-like structures. During pituitary development, acts in parallel or alternatively with HESX1 to control cell proliferation through Wnt/beta-catenin pathway. Plays a role in eye development by suppressing WNT1 expression and in dorsal-ventral patterning by repressing BMP signaling pathway. The polypeptide is Homeobox protein SIX3 (Six3) (Mus musculus (Mouse)).